The primary structure comprises 445 residues: Ribosomal protein uS12 methylthiotransferase RimO (445 aa).

Residues 4 to 119 (IKVALVSLGC…LLESIKVFLK (116 aa)) form the MTTase N-terminal domain. Residues C13, C48, C82, C156, C160, and C163 each contribute to the [4Fe-4S] cluster site. One can recognise a Radical SAM core domain in the interval 142 to 372 (TTPTYTAYVR…MILQQSISKD (231 aa)). One can recognise a TRAM domain in the interval 375–441 (KEKIGKIYEV…EYDLIGVVYN (67 aa)).

The protein belongs to the methylthiotransferase family. RimO subfamily. [4Fe-4S] cluster is required as a cofactor.

It localises to the cytoplasm. The enzyme catalyses L-aspartate(89)-[ribosomal protein uS12]-hydrogen + (sulfur carrier)-SH + AH2 + 2 S-adenosyl-L-methionine = 3-methylsulfanyl-L-aspartate(89)-[ribosomal protein uS12]-hydrogen + (sulfur carrier)-H + 5'-deoxyadenosine + L-methionine + A + S-adenosyl-L-homocysteine + 2 H(+). In terms of biological role, catalyzes the methylthiolation of an aspartic acid residue of ribosomal protein uS12. The sequence is that of Ribosomal protein uS12 methylthiotransferase RimO from Clostridium botulinum (strain Langeland / NCTC 10281 / Type F).